We begin with the raw amino-acid sequence, 405 residues long: MEGESTSALLSGFVFGALAFQHLSTDSDTEGFLLGDVKGEAKNSITDSQMDDVEVVYTIDIQKHIPCYQLFSFYNSAGELNEPALKKILSGRKKSVIGWYKFRRNTDQIMTFRERLLHKNLQSHLSNQGLVFLLLTSSVMTESCSTYRLEHALHRPQEGLFQKVPLVVTNLGMAEQQGYRTVSGSCASSGFVRAVKQHRSEFFYEDGSLQEVHKINEMYATLQEELKKMCSDVEVSERSVEKLLTEVSQLKEEINRKKQHKISSGGNKDQLEEPKENVLLCQALRTFFPSSDLQTCIVSFKGRISKNCCKIDHNINIMDKLTLMVEERDFTEAETKLVTKRKVRVTTTGPKSLKKLRSLQLDQELHQDEEDCNQETKLALSSAETDEEALENPKDTNEYSYSPTF.

The MPN domain occupies 7-153 (SALLSGFVFG…CSTYRLEHAL (147 aa)). Residues 208-262 (SLQEVHKINEMYATLQEELKKMCSDVEVSERSVEKLLTEVSQLKEEINRKKQHKI) adopt a coiled-coil conformation. The interval 365 to 405 (LHQDEEDCNQETKLALSSAETDEEALENPKDTNEYSYSPTF) is disordered. Ser402 carries the post-translational modification Phosphoserine. The short motif at 402 to 405 (SPTF) is the pSXXF motif element.

It belongs to the FAM175 family. Abraxas subfamily. In terms of assembly, component of the BRCA1-A complex. Component of the BRISC complex. Homodimer. Interacts directly (when phosphorylated at Ser-402) with BRCA1. The phosphorylated homodimer can interact directly with two BRCA1 chains, giving rise to a heterotetramer. Phosphorylation of Ser-402 of the pSXXF motif by ATM or ATR constitutes a specific recognition motif for the BRCT domain of BRCA1.

The protein resides in the nucleus. In terms of biological role, involved in DNA damage response and double-strand break (DSB) repair. Component of the BRCA1-A complex, acting as a central scaffold protein that assembles the various components of the complex and mediates the recruitment of BRCA1. The BRCA1-A complex specifically recognizes 'Lys-63'-linked ubiquitinated histones H2A and H2AX at DNA lesion sites, leading to target the BRCA1-BARD1 heterodimer to sites of DNA damage at DSBs. This complex also possesses deubiquitinase activity that specifically removes 'Lys-63'-linked ubiquitin on histones H2A and H2AX. The protein is BRCA1-A complex subunit Abraxas 1 of Gallus gallus (Chicken).